Here is a 415-residue protein sequence, read N- to C-terminus: Small ribosomal subunit protein uS5m (415 aa).

Positions 1 to 31 (MRRSGPELWKTLTSVSKSGQKKGRRNTRQPV) are disordered. Residues 131–197 (FETYCLEVKR…GMASRKIFHV (67 aa)) form the S5 DRBM domain. The interval 396 to 415 (GVEPMPLGIGLSHVVPKKDD) is disordered.

This sequence belongs to the universal ribosomal protein uS5 family. As to quaternary structure, component of the mitochondrial ribosome small subunit (28S) which comprises a 12S rRNA and about 30 distinct proteins.

The protein resides in the mitochondrion. This chain is Small ribosomal subunit protein uS5m (mrps-5), found in Caenorhabditis briggsae.